The chain runs to 416 residues: MYMDAFGWSAPAAPCQPSCGPGGDDDDDVLLAAVLGASFELHSLVDGGGNGAAGAVRSDDAYGLDVDLPSHQMSLLRCQDGLSALHGDASPTAAAAAFLDSVDVLPVPAIAGATHDDGGLLDRFAFPNVAETTTVQAAASNTAFSGYSSNTTGGGNISSGESNTYTEVASTPCAVSTTTTTTALPPSKRKLPEKYPVVGTSPTTKTTTTSETAAERRSTKRGAGGSSSITFGGGCHGAGAAAALLGYGRGYEPDTEAIAQVKEMIYRAAAMRPVTLGGPASASDPSSRPPPPPQRPRRKNVRISSDPQTVAARLRRERVSERLRVLQRLVPGGSKMDTATMLDEAASYLKFLKSQLEALETLGNGNGNGNLLHHGYYTGSRNATATAATGSSNSTVLAFGRDGLAGFVKSNRNLQL.

Low complexity-rich tracts occupy residues S176 to P186 and T200 to T212. Disordered stretches follow at residues S176–S226 and L276–A311. Residues I303–R316 form a basic motif; degenerate region. The region spanning I303–L352 is the bHLH domain. Residues E317–L352 are helix-loop-helix motif.

The protein belongs to the bHLH protein family. Interacts with PIL13 and PIL15.

The protein resides in the nucleus. Its function is as follows. Transcription factor involved in the negative regulation of flowering. May be involved in the repression of the flowering factor GI and HD1 by interacting with PIL13 and PIL15 and competing with PRR1. Possesses transactivation activity in yeast. The sequence is that of Transcription factor LATE FLOWERING from Oryza sativa subsp. japonica (Rice).